A 276-amino-acid polypeptide reads, in one-letter code: Dermonecrotic toxin LlSicTox-alphaIV2iv (276 aa).

The active site involves His5. The Mg(2+) site is built by Glu25 and Asp27. The Nucleophile role is filled by His41. 2 disulfides stabilise this stretch: Cys45-Cys51 and Cys47-Cys193. Position 85 (Asp85) interacts with Mg(2+).

Belongs to the arthropod phospholipase D family. Class II subfamily. Requires Mg(2+) as cofactor. Expressed by the venom gland.

It localises to the secreted. The catalysed reaction is an N-(acyl)-sphingosylphosphocholine = an N-(acyl)-sphingosyl-1,3-cyclic phosphate + choline. The enzyme catalyses an N-(acyl)-sphingosylphosphoethanolamine = an N-(acyl)-sphingosyl-1,3-cyclic phosphate + ethanolamine. It catalyses the reaction a 1-acyl-sn-glycero-3-phosphocholine = a 1-acyl-sn-glycero-2,3-cyclic phosphate + choline. It carries out the reaction a 1-acyl-sn-glycero-3-phosphoethanolamine = a 1-acyl-sn-glycero-2,3-cyclic phosphate + ethanolamine. Its function is as follows. Dermonecrotic toxins cleave the phosphodiester linkage between the phosphate and headgroup of certain phospholipids (sphingolipid and lysolipid substrates), forming an alcohol (often choline) and a cyclic phosphate. This toxin acts on sphingomyelin (SM). It may also act on ceramide phosphoethanolamine (CPE), lysophosphatidylcholine (LPC) and lysophosphatidylethanolamine (LPE), but not on lysophosphatidylserine (LPS), and lysophosphatidylglycerol (LPG). It acts by transphosphatidylation, releasing exclusively cyclic phosphate products as second products. Induces dermonecrosis, hemolysis, increased vascular permeability, edema, inflammatory response, and platelet aggregation. The chain is Dermonecrotic toxin LlSicTox-alphaIV2iv from Loxosceles laeta (South American recluse spider).